Reading from the N-terminus, the 268-residue chain is Phosphatidylglycerol--prolipoprotein diacylglyceryl transferase (268 aa).

Helical transmembrane passes span 23-43 (WYAL…LALA), 58-78 (FLTW…VLFY), 96-116 (GGMS…LFCW), and 119-139 (GLSP…GLFF). Arg141 provides a ligand contact to a 1,2-diacyl-sn-glycero-3-phospho-(1'-sn-glycerol). Helical transmembrane passes span 181-201 (SFLE…MPAV), 206-226 (GMTA…AEFF), and 238-258 (AGAT…VWLV).

This sequence belongs to the Lgt family.

It is found in the cell inner membrane. The enzyme catalyses L-cysteinyl-[prolipoprotein] + a 1,2-diacyl-sn-glycero-3-phospho-(1'-sn-glycerol) = an S-1,2-diacyl-sn-glyceryl-L-cysteinyl-[prolipoprotein] + sn-glycerol 1-phosphate + H(+). The protein operates within protein modification; lipoprotein biosynthesis (diacylglyceryl transfer). In terms of biological role, catalyzes the transfer of the diacylglyceryl group from phosphatidylglycerol to the sulfhydryl group of the N-terminal cysteine of a prolipoprotein, the first step in the formation of mature lipoproteins. This is Phosphatidylglycerol--prolipoprotein diacylglyceryl transferase from Azospirillum brasilense.